A 770-amino-acid polypeptide reads, in one-letter code: POU domain, class 2, transcription factor 1 (770 aa).

Residues 1–26 (MNNPSETNKSSMESEDASTGTQTNGL) are compositionally biased toward polar residues. 4 disordered regions span residues 1 to 33 (MNNPSETNKSSMESEDASTGTQTNGLDFQKQPV), 68 to 97 (LNVQSKSSEESGDSQQSSQPSSQPPSVQSA), 262 to 285 (VQTLPQSQSTPKRIDTPSLEEPSD), and 357 to 385 (LSSDSTASSPSALNSPGLGAEGLNRRRKK). The segment covering 80–97 (DSQQSSQPSSQPPSVQSA) has biased composition (low complexity). Residues 262-272 (VQTLPQSQSTP) are compositionally biased toward polar residues. Phosphothreonine occurs at positions 271 and 277. The region spanning 281 to 355 (EEPSDLEELE…LLEKWLNDAE (75 aa)) is the POU-specific domain. Serine 284 bears the Phosphoserine mark. The segment covering 357 to 372 (LSSDSTASSPSALNSP) has biased composition (low complexity). Positions 382–441 (RRKKRTSIETNIRVALEKSFMENQKPTSEDITLIAEQLNMEKEVIRVWFCNRRQKEKRIN) form a DNA-binding region, homeobox. 2 positions are modified to phosphoserine: serine 388 and serine 451. The span at 519–580 (TTTAGTTDST…TNTTQTTSTP (62 aa)) shows a compositional bias: low complexity. The disordered stretch occupies residues 519-589 (TTTAGTTDST…PLPSPLGASQ (71 aa)).

It belongs to the POU transcription factor family. Class-2 subfamily. In terms of assembly, interacts with POU2AF1; the interaction increases POU2F1 transactivation activity. Interacts with NR3C1, AR, PGR and HCFC1. Phosphorylated by PRKDC. Ubiquitously expressed. However, isoforms 4 and 5 are only expressed in lymphocytes.

The protein resides in the nucleus. Its function is as follows. Transcription factor that binds to the octamer motif (5'-ATTTGCAT-3') and activates the promoters of the genes for some small nuclear RNAs (snRNA) and of genes such as those for histone H2B and immunoglobulins. Modulates transcription transactivation by NR3C1, AR and PGR. This Mus musculus (Mouse) protein is POU domain, class 2, transcription factor 1 (Pou2f1).